Here is a 1440-residue protein sequence, read N- to C-terminus: MYNPYQQPSYGAPQQPQQTGYGFNATGGNAMPQSQFQSTGYYQQQPTYQQPGFQPQQTGFQPQATGYSVPQTSYQTGFQVQQTGFQPQQTGFQQQSAETNTELKIPNIRLSFITASDQSKFEHLFRTAVRKGETAISGDAARDILLRSGLPPVTLAEIWSLSDTNKSGSLLFPEFALSLHLCNLALKSEPLPSVLPEKWSNEVQSFVDAISFSVPEDPSKILANTPFASLGTEEKTSWMDAPAAPSTSFQPQLTGFQPPQMPAQRTGGQITAQRTGGGSLIPLQPQQTAGLVPAGLQRQNTGYQPPQPLQSQNTGFQSSVGRQNTGYQPPLQQQGTGYQPLKQQNTGYQPPLQQQGTGYQPPLQQQGTGYQPPLQQQGTGYQPLQSQGTGFQSQGTIQPQGTGFQPQSTGFQPQPTGLSSQPTGKPGQWGFVSTPTGGIPGLSAMEQHFLPNTQLSSNNLQNAMGGSLKTNVTWAITKQEKSIYDGIFQAWDKSRQGFIDGETAIGIFGKSGLARPDLETIWNLADGDNKGKLNKDEFSVAMHLVYRRLNGFDLPLRLPPELIPPSKKHIQESMDSLKNSLRGGNNKPKRTQTSSSLYKHDDDDVGYVSTARHRKKSDSSSGSGSGTMSIEQLKKEIREKKILLDAMDSEDRDSSVLSQRDREWNEREIESLKFRILQAHNKLESSGISGSHEEKVQLLDRLRHLTQDKMPKLISNIHVVNNEICSRQMKVAKLRLQKEHPDWAPEASDADIVGTGPNGEVTDYDRKKFKSKQLLKRRMAALSGAKTGSTDTAVDDQLAKATEDAKNLGDQQRKMIEEISGSIKDLEDGCISALQSTTREDSYEKWEKGQGVSSDVAAFIRSLPKSEGSKNGRNEKTQSPYTQPTKSQSQSAQSTQSQSQSTQSVQTQPAQPATYSSYSSPEDRAAYIKAQAEKRMNERLAKLGITRRKETGSKAPEVPKEPVEAPKPQEIETPKETETQRETNTKSTSQTSKAEPQKVSVPPAIPSSSQAPAIPSPAIPPAPEDDSEDEEYAALMKQKQEMEERRLRKKKEKEERLARLKREMEEMNKEEDSDEEPVTSVPTYTNGSVKSSTQPISQSEEVPKTEEEKSGESEQTASKPEATPTEQAPKPDLVSTSAQSKANPFSKNNNPFFKPTQTPTIDPKKAAAQRDSQRGLGSDDWSDSDDNSSDDDGPNRAGAARLASMLFGGMAPPPRAPTIEKEETGSKETAEVPPPTEVAPPPVPAAPPASVPPPISAASSKETDSDDEWGTPSAEAANDHDDFDFGNNFEPSMAPSPPPVPTQHIPEPVTDVPPIPQSIPPPPQSFAATVEDAPPPPPIPSQVPPPPPPPPSLFPTESSNAPPAPPPPPPPSAPSAVPPPPPMAPAAPPSAPAPSPGGPPGGAPNIGALLGQITGGKSLKKVDDSQKRIADGATVGRVVD.

Residues 1–21 (MYNPYQQPSYGAPQQPQQTGY) show a composition bias toward polar residues. A disordered region spans residues 1 to 67 (MYNPYQQPSY…TGFQPQATGY (67 aa)). The span at 39–63 (TGYYQQQPTYQQPGFQPQQTGFQPQ) shows a compositional bias: low complexity. One can recognise an EH 1 domain in the interval 117 to 206 (DQSKFEHLFR…EKWSNEVQSF (90 aa)). Residues 150–185 (LPPVTLAEIWSLSDTNKSGSLLFPEFALSLHLCNLA) form the EF-hand 1 domain. Disordered stretches follow at residues 234–285 (EKTS…PLQP) and 297–428 (QRQN…KPGQ). Polar residues-rich tracts occupy residues 245–257 (PSTSFQPQLTGFQ) and 297–384 (QRQN…YQPL). Low complexity predominate over residues 385 to 398 (QSQGTGFQSQGTIQ). Residues 399-423 (PQGTGFQPQSTGFQPQPTGLSSQPT) are compositionally biased toward polar residues. Positions 480–569 (EKSIYDGIFQ…PELIPPSKKH (90 aa)) constitute an EH 2 domain. In terms of domain architecture, EF-hand 2 spans 513-548 (LARPDLETIWNLADGDNKGKLNKDEFSVAMHLVYRR). Disordered stretches follow at residues 564 to 629 (PPSK…GTMS) and 861 to 1440 (RSLP…RVVD). The segment covering 573 to 583 (SMDSLKNSLRG) has biased composition (polar residues). Positions 627–686 (TMSIEQLKKEIREKKILLDAMDSEDRDSSVLSQRDREWNEREIESLKFRILQAHNKLESS) form a coiled coil. The segment covering 867 to 876 (EGSKNGRNEK) has biased composition (basic and acidic residues). A compositionally biased stretch (low complexity) spans 882–914 (TQPTKSQSQSAQSTQSQSQSTQSVQTQPAQPAT). Residues 921–984 (PEDRAAYIKA…KETETQRETN (64 aa)) are compositionally biased toward basic and acidic residues. Residues 985–994 (TKSTSQTSKA) are compositionally biased toward polar residues. Residues 1023-1032 (PEDDSEDEEY) show a composition bias toward acidic residues. A coiled-coil region spans residues 1024–1076 (EDDSEDEEYAALMKQKQEMEERRLRKKKEKEERLARLKREMEEMNKEEDSDEE). Residues 1038–1067 (QKQEMEERRLRKKKEKEERLARLKREMEEM) show a composition bias toward basic and acidic residues. A compositionally biased stretch (acidic residues) spans 1068–1077 (NKEEDSDEEP). Residues 1080 to 1100 (SVPTYTNGSVKSSTQPISQSE) are compositionally biased toward polar residues. Basic and acidic residues predominate over residues 1101–1112 (EVPKTEEEKSGE). The segment covering 1140-1155 (SKANPFSKNNNPFFKP) has biased composition (low complexity). Acidic residues predominate over residues 1180 to 1192 (DWSDSDDNSSDDD). Positions 1218–1230 (TIEKEETGSKETA) are enriched in basic and acidic residues. 4 stretches are compositionally biased toward pro residues: residues 1232-1255 (VPPPTEVAPPPVPAAPPASVPPPI), 1311-1324 (DVPPIPQSIPPPPQ), 1333-1353 (APPPPPIPSQVPPPPPPPPSL), and 1362-1402 (PPAP…PPGG). The region spanning 1405-1422 (NIGALLGQITGGKSLKKV) is the WH2 domain. The span at 1420-1430 (KKVDDSQKRIA) shows a compositional bias: basic and acidic residues.

The protein belongs to the PAN1 family. Component of the PAN1 actin cytoskeleton-regulatory complex.

The protein localises to the cell membrane. The protein resides in the endosome membrane. Its subcellular location is the cytoplasm. It localises to the cytoskeleton. It is found in the actin patch. Its function is as follows. Component of the PAN1 actin cytoskeleton-regulatory complex required for the internalization of endosomes during actin-coupled endocytosis. The complex links the site of endocytosis to the cell membrane-associated actin cytoskeleton. Mediates uptake of external molecules and vacuolar degradation of plasma membrane proteins. Plays a role in the proper organization of the cell membrane-associated actin cytoskeleton and promotes its destabilization. The polypeptide is Actin cytoskeleton-regulatory complex protein PAN1 (PAN1) (Meyerozyma guilliermondii (strain ATCC 6260 / CBS 566 / DSM 6381 / JCM 1539 / NBRC 10279 / NRRL Y-324) (Yeast)).